The primary structure comprises 498 residues: Protein flp (498 aa).

The next 4 helical transmembrane spans lie at 6 to 26 (LYFLSISIIILVAISIAIYIT), 389 to 409 (FNIVTVLMTTLILLAFIFSAY), 433 to 453 (LTLCLCIAIALILYALPYLIL), and 471 to 491 (LALITTLIALFSTLIVILLFL).

It is found in the cell membrane. Its precise function is unknown. Has no penicillin-binding activity and is not involved in methicillin resistance. This Staphylococcus aureus (strain Mu50 / ATCC 700699) protein is Protein flp (flp).